A 398-amino-acid chain; its full sequence is Bone morphogenetic protein 2-A (398 aa).

The signal sequence occupies residues 1–23; that stretch reads MVAGIHSLLLLLFYQVLLSGCTG. Positions 24–284 are excised as a propeptide; it reads LIPEEGKRKY…GHALHKRQKR (261 aa). 3 N-linked (GlcNAc...) asparagine glycosylation sites follow: Asn-137, Asn-202, and Asn-340. 3 cysteine pairs are disulfide-bonded: Cys-298-Cys-363, Cys-327-Cys-395, and Cys-331-Cys-397.

The protein belongs to the TGF-beta family. In terms of assembly, homodimer; disulfide-linked.

The protein localises to the secreted. Its function is as follows. Induces cartilage and bone formation. The chain is Bone morphogenetic protein 2-A (bmp2-a) from Xenopus laevis (African clawed frog).